Consider the following 645-residue polypeptide: Methionine--tRNA ligase (645 aa).

The 'HIGH' region motif lies at 13–23; sequence YYPSTNLHIGN. 4 residues coordinate Zn(2+): Cys-128, Cys-131, Cys-145, and Cys-148. The 'KMSKS' region signature appears at 298–302; the sequence is KMSKS. ATP is bound at residue Lys-301. The region spanning 544–645 is the tRNA-binding domain; it reads DFDKIDLRVV…GEMLTGSQVR (102 aa).

It belongs to the class-I aminoacyl-tRNA synthetase family. MetG type 2A subfamily. In terms of assembly, homodimer. Requires Zn(2+) as cofactor.

It is found in the cytoplasm. It catalyses the reaction tRNA(Met) + L-methionine + ATP = L-methionyl-tRNA(Met) + AMP + diphosphate. In terms of biological role, is required not only for elongation of protein synthesis but also for the initiation of all mRNA translation through initiator tRNA(fMet) aminoacylation. The polypeptide is Methionine--tRNA ligase (metG) (Clostridium perfringens (strain 13 / Type A)).